The following is a 963-amino-acid chain: Glycine dehydrogenase (decarboxylating) (963 aa).

Lys-710 carries the N6-(pyridoxal phosphate)lysine modification.

It belongs to the GcvP family. The glycine cleavage system is composed of four proteins: P, T, L and H. Pyridoxal 5'-phosphate serves as cofactor.

It carries out the reaction N(6)-[(R)-lipoyl]-L-lysyl-[glycine-cleavage complex H protein] + glycine + H(+) = N(6)-[(R)-S(8)-aminomethyldihydrolipoyl]-L-lysyl-[glycine-cleavage complex H protein] + CO2. Its function is as follows. The glycine cleavage system catalyzes the degradation of glycine. The P protein binds the alpha-amino group of glycine through its pyridoxal phosphate cofactor; CO(2) is released and the remaining methylamine moiety is then transferred to the lipoamide cofactor of the H protein. This is Glycine dehydrogenase (decarboxylating) from Pseudoalteromonas translucida (strain TAC 125).